We begin with the raw amino-acid sequence, 250 residues long: Kv channel-interacting protein 4 (250 aa).

Residues 2–44 (NVRRVESISAQLEEASSTGGFLYAQNSTKRSIKERLMKLLPCS) form a KIS region. 2 positions are modified to phosphoserine: Ser-17 and Ser-56. Positions 61–117 (LEMATVRHRPEALELLEAQSKFTKKELQILYRGFKNECPSGVVNEETFKEIYSQFFP) constitute an EF-hand 1; degenerate domain. EF-hand domains lie at 120–155 (DSTT…LLRG), 156–191 (TVQE…IYDM), and 204–239 (APRQ…DENI). Ca(2+) contacts are provided by Asp-133, Asp-135, Asn-137, Asp-144, Asp-169, Asn-171, Asp-173, Tyr-175, Glu-180, Asp-217, Asn-219, Asp-221, and Glu-228. An interaction with KCND2 region spans residues 237-250 (ENIMRSMQLFENVI).

The protein belongs to the recoverin family. In terms of assembly, component of heteromultimeric potassium channels. Identified in potassium channel complexes containing KCND1, KCND2, KCND3, KCNIP1, KCNIP2, KCNIP3, KCNIP4, DPP6 and DPP10. Interacts with KCND2. Interacts with KCND3. Interacts with the C-terminus of PSEN2 and probably PSEN1.

Its subcellular location is the cell membrane. It is found in the cytoplasm. The protein localises to the peroxisome. Regulatory subunit of Kv4/D (Shal)-type voltage-gated rapidly inactivating A-type potassium channels. Modulates KCND2 channel density, inactivation kinetics and rate of recovery from inactivation in a calcium-dependent and isoform-specific manner. Modulates KCND3/Kv4.3 currents. Isoform 4 does not increase KCND2 expression at the cell membrane. Isoform 4 retains KCND3 in the endoplasmic reticulum and negatively regulates its expression at the cell membrane. This Macaca fascicularis (Crab-eating macaque) protein is Kv channel-interacting protein 4 (KCNIP4).